The sequence spans 318 residues: Protein LplB (318 aa).

6 helical membrane-spanning segments follow: residues 35-55 (LIPG…GVLI), 94-114 (LMLA…LALL), 130-150 (FIYV…FVFF), 182-202 (IVMQ…LAAL), 236-256 (IIVL…EQVY), and 289-309 (AVGL…NYIA). The region spanning 90 to 305 (LRNTLMLASL…VVGIILIFGA (216 aa)) is the ABC transmembrane type-1 domain.

Belongs to the binding-protein-dependent transport system permease family. MalFG subfamily.

The protein localises to the cell membrane. In Bacillus subtilis (strain 168), this protein is Protein LplB (lplB).